The primary structure comprises 440 residues: tRNA(Ile)-lysidine synthase (440 aa).

31–36 (SGGADS) contributes to the ATP binding site.

This sequence belongs to the tRNA(Ile)-lysidine synthase family.

The protein resides in the cytoplasm. The enzyme catalyses cytidine(34) in tRNA(Ile2) + L-lysine + ATP = lysidine(34) in tRNA(Ile2) + AMP + diphosphate + H(+). Ligates lysine onto the cytidine present at position 34 of the AUA codon-specific tRNA(Ile) that contains the anticodon CAU, in an ATP-dependent manner. Cytidine is converted to lysidine, thus changing the amino acid specificity of the tRNA from methionine to isoleucine. This Borreliella afzelii (strain PKo) (Borrelia afzelii) protein is tRNA(Ile)-lysidine synthase.